The chain runs to 309 residues: Mitochondrial import receptor subunit TOM34 (309 aa).

S8 carries the post-translational modification Phosphoserine. TPR repeat units lie at residues 9–42 (VEQL…LQAR), 51–84 (SVLY…VPFS), and 86–118 (KPLL…DNSV). Residues 158–187 (WSSLPSENHKETAKSKSKETTATKNRVPSA) are disordered. S160 bears the Phosphoserine mark. Residues 164–178 (ENHKETAKSKSKETT) show a composition bias toward basic and acidic residues. At S186 the chain carries Phosphoserine. TPR repeat units lie at residues 193-226 (ARVL…SSLE), 227-260 (SATY…DGKN), and 262-294 (KAFY…EPRN). Residue K197 forms a Glycyl lysine isopeptide (Lys-Gly) (interchain with G-Cter in SUMO2) linkage.

It belongs to the Tom34 family. In terms of assembly, interacts with HSP90A, VCP, ATP6V1D, KIAA0665, AMPK, and DMAP1 through its TPR repeat.

It is found in the cytoplasm. The protein localises to the mitochondrion outer membrane. Functionally, plays a role in the import of cytosolically synthesized preproteins into mitochondria. Binds the mature portion of precursor proteins. Interacts with cellular components, and possesses weak ATPase activity. May be a chaperone-like protein that helps to keep newly synthesized precursors in an unfolded import compatible state. This Rattus norvegicus (Rat) protein is Mitochondrial import receptor subunit TOM34 (Tomm34).